Consider the following 373-residue polypeptide: 2-oxoglutarate oxidoreductase subunit KorB (373 aa).

Positions 26–50 (TPSLTKNAGVPTTDQPQKGKDFTSD) are disordered. Positions 27–41 (PSLTKNAGVPTTDQP) are enriched in polar residues.

In terms of assembly, KG oxidoreductase (KOR) is composed of KorA and KorB subunits. It depends on Mg(2+) as a cofactor.

The catalysed reaction is 2 oxidized [2Fe-2S]-[ferredoxin] + 2-oxoglutarate + CoA = succinyl-CoA + 2 reduced [2Fe-2S]-[ferredoxin] + CO2 + H(+). It functions in the pathway carbohydrate metabolism; tricarboxylic acid cycle. Component of KG oxidoreductase (KOR) that catalyzes the CoA-dependent oxidative decarboxylation of 2-oxoglutarate (alpha-ketoglutarate, KG) to succinyl-CoA. Methyl viologen can act as electron acceptor in vitro; the physiologic electron acceptor is unknown. Is involved in the alternative TCA pathway that functions concurrently with fatty acid beta-oxidation. Since a growing body of evidence indicates that lipids (for example cholesterol and fatty acids) are a predominant growth substrate for M.tuberculosis during infection, flux through KOR likely represents an important step in intermediary metabolism in vivo. KOR-dependent decarboxylation of KG also appears to be an important source of CO(2) in M.tuberculosis metabolism. The protein is 2-oxoglutarate oxidoreductase subunit KorB (korB) of Mycobacterium tuberculosis (strain ATCC 25618 / H37Rv).